The sequence spans 510 residues: Hexose carrier protein HEX6 (510 aa).

The Cytoplasmic segment spans residues 1-22 (MAAGLAITSEGGQYNGRMTSFV). Transmembrane regions (helical) follow at residues 23 to 43 (ALSC…IGVS), 83 to 103 (SFTS…SSVT), 118 to 128 (VFLAXAALGGA), 140 to 160 (VLLG…LSEM), 169 to 189 (INNG…LINY), 202 to 222 (ISLA…LFLP), 284 to 304 (LVMA…VIAF), 325 to 345 (IVTG…VDKL), 349 to 369 (ALFI…GSIM), 382 to 402 (GYAY…GWSW), 428 to 448 (AVSF…LCHF), and 451 to 471 (GIFF…HFLL). At 472-510 (PETKKVPIEKMDIVWRDHWFWKKIIGEEAAEENNKMEAA) the chain is on the cytoplasmic side.

It belongs to the major facilitator superfamily. Sugar transporter (TC 2.A.1.1) family.

The protein resides in the membrane. Functionally, active uptake of hexoses. Probable glucose/hydrogen symport. This chain is Hexose carrier protein HEX6 (HEX6), found in Ricinus communis (Castor bean).